We begin with the raw amino-acid sequence, 801 residues long: DNA mismatch repair protein MutS (801 aa).

590–597 (GPNMSGKS) contacts ATP.

Belongs to the DNA mismatch repair MutS family.

Its function is as follows. This protein is involved in the repair of mismatches in DNA. It is possible that it carries out the mismatch recognition step. This protein has a weak ATPase activity. This Thermotoga neapolitana (strain ATCC 49049 / DSM 4359 / NBRC 107923 / NS-E) protein is DNA mismatch repair protein MutS.